A 953-amino-acid polypeptide reads, in one-letter code: TPR repeat-containing protein ZIP4 (953 aa).

The stretch at 129-162 is one TPR 1 repeat; sequence ASFFHRSGLAWLDLGRVDLASACFEKATPLVSAA. Residues 248-269 are disordered; that stretch reads AASPSSSSPRTPPYGGATPKTP. TPR repeat units follow at residues 432 to 465 and 473 to 506; these read HALL…VSRD and ADCF…EPNI. The disordered stretch occupies residues 924–953; the sequence is RVSGDEPDECSQEEAPKASISGSMSQPVLV. Polar residues predominate over residues 943-953; sequence ISGSMSQPVLV.

The protein resides in the nucleus. The protein localises to the chromosome. Functionally, required for crossover formation, complete synapsis of homologous chromosomes and bivalent formation during meiosis. Is specific to recombination events resulting in interference-sensitive crossovers (class I meiotic crossover) and works cooperatively with MER3 to promote crossovers. The protein is TPR repeat-containing protein ZIP4 of Oryza sativa subsp. indica (Rice).